The primary structure comprises 362 residues: Heat-inducible transcription repressor HrcA (362 aa).

It belongs to the HrcA family.

Functionally, negative regulator of class I heat shock genes (grpE-dnaK-dnaJ and groELS operons). Prevents heat-shock induction of these operons. The protein is Heat-inducible transcription repressor HrcA of Bradyrhizobium sp. (strain ORS 278).